The primary structure comprises 554 residues: 2-succinyl-5-enolpyruvyl-6-hydroxy-3-cyclohexene-1-carboxylate synthase (554 aa).

It belongs to the TPP enzyme family. MenD subfamily. In terms of assembly, homodimer. Mg(2+) is required as a cofactor. Mn(2+) serves as cofactor. The cofactor is thiamine diphosphate.

The enzyme catalyses isochorismate + 2-oxoglutarate + H(+) = 5-enolpyruvoyl-6-hydroxy-2-succinyl-cyclohex-3-ene-1-carboxylate + CO2. The protein operates within quinol/quinone metabolism; 1,4-dihydroxy-2-naphthoate biosynthesis; 1,4-dihydroxy-2-naphthoate from chorismate: step 2/7. It functions in the pathway quinol/quinone metabolism; menaquinone biosynthesis. Functionally, catalyzes the thiamine diphosphate-dependent decarboxylation of 2-oxoglutarate and the subsequent addition of the resulting succinic semialdehyde-thiamine pyrophosphate anion to isochorismate to yield 2-succinyl-5-enolpyruvyl-6-hydroxy-3-cyclohexene-1-carboxylate (SEPHCHC). In Lactococcus lactis subsp. cremoris (strain SK11), this protein is 2-succinyl-5-enolpyruvyl-6-hydroxy-3-cyclohexene-1-carboxylate synthase.